The sequence spans 308 residues: MTTKPRHPEKVNKPLNPIKKKPDWIRSKLVNSKEFFLTKTIVNNNNLVTVCQEANCPNITECWSKRHATFMIMGDTCTRACAFCDVKTGRPGKLDSLEPVKIAEAVKKLNLKHVVITSVDRDDLDDGGSNHFFEVIDQTRKRNPNTSIEVLTPDFLRKGDAYKKVLEANPDVFNHNIETVPRLYLKVRPGSRYFSSLELLKNAKLVNKNVFTKSGLMVGLGENKEEIIQVMDDLKAADVDFLTIGQYLQPSVRHHPLDRYYHPDEFKELETIAKSKGFLLVSSTPLTRSSYHADEDFAKLQLNRINNH.

Cys51, Cys56, Cys62, Cys77, Cys81, Cys84, and Ser290 together coordinate [4Fe-4S] cluster. The region spanning 63–279 is the Radical SAM core domain; sequence WSKRHATFMI…ETIAKSKGFL (217 aa).

Belongs to the radical SAM superfamily. Lipoyl synthase family. It depends on [4Fe-4S] cluster as a cofactor.

It localises to the cytoplasm. The enzyme catalyses [[Fe-S] cluster scaffold protein carrying a second [4Fe-4S](2+) cluster] + N(6)-octanoyl-L-lysyl-[protein] + 2 oxidized [2Fe-2S]-[ferredoxin] + 2 S-adenosyl-L-methionine + 4 H(+) = [[Fe-S] cluster scaffold protein] + N(6)-[(R)-dihydrolipoyl]-L-lysyl-[protein] + 4 Fe(3+) + 2 hydrogen sulfide + 2 5'-deoxyadenosine + 2 L-methionine + 2 reduced [2Fe-2S]-[ferredoxin]. Its pathway is protein modification; protein lipoylation via endogenous pathway; protein N(6)-(lipoyl)lysine from octanoyl-[acyl-carrier-protein]: step 2/2. Functionally, catalyzes the radical-mediated insertion of two sulfur atoms into the C-6 and C-8 positions of the octanoyl moiety bound to the lipoyl domains of lipoate-dependent enzymes, thereby converting the octanoylated domains into lipoylated derivatives. The sequence is that of Lipoyl synthase from Pelagibacter ubique (strain HTCC1062).